A 129-amino-acid polypeptide reads, in one-letter code: Glycine cleavage system H protein (129 aa).

Positions 24–106 (AVRIGLSAYA…HGEGWLLVIQ (83 aa)) constitute a Lipoyl-binding domain. Lys65 carries the N6-lipoyllysine modification.

The protein belongs to the GcvH family. The glycine cleavage system is composed of four proteins: P, T, L and H. It depends on (R)-lipoate as a cofactor.

In terms of biological role, the glycine cleavage system catalyzes the degradation of glycine. The H protein shuttles the methylamine group of glycine from the P protein to the T protein. The polypeptide is Glycine cleavage system H protein (Synechococcus sp. (strain WH7803)).